Reading from the N-terminus, the 142-residue chain is ASGGIGEPLSLLLKQSPLISQLALYDIAHVKGVAADLSHIETQAHVTAHLGPGELAECLTGANVVIIPAGLPRKPGMTRDDLFNTNASIVAELIDSCAKNCPKAMICIITNPVNSTVPIAAEILKRHNVYDPKRLFGVTTLD.

Residues A1 to G6 and D26 contribute to the NAD(+) site. Substrate is bound by residues R73 and R79. NAD(+) contacts are provided by residues N86 and I109–N111. Position 111 (N111) interacts with substrate.

It belongs to the LDH/MDH superfamily. MDH type 1 family. As to quaternary structure, homodimer.

Its subcellular location is the mitochondrion matrix. The enzyme catalyses (S)-malate + NAD(+) = oxaloacetate + NADH + H(+). This Schistosoma mansoni (Blood fluke) protein is Malate dehydrogenase, mitochondrial.